An 853-amino-acid polypeptide reads, in one-letter code: Aminotransferase PigE (853 aa).

G503–T504 is a binding site for pyridoxal 5'-phosphate. K645 carries the N6-(pyridoxal phosphate)lysine modification. T680 provides a ligand contact to pyridoxal 5'-phosphate.

The protein belongs to the class-III pyridoxal-phosphate-dependent aminotransferase family. In terms of assembly, homodimer. Pyridoxal 5'-phosphate is required as a cofactor.

It participates in antibiotic biosynthesis; prodigiosin biosynthesis. Its function is as follows. Involved in the biosynthesis of 2-methyl-3-n-amyl-pyrrole (MAP), one of the terminal products involved in the biosynthesis of the red antibiotic prodigiosin (Pig). Catalyzes the transamination to the aldehyde group of 3-acetyloctanal, resulting in an aminoketone, which spontaneously cyclizes to yield the dihydro form of MAP (H2MAP). This Serratia sp. (strain ATCC 39006) (Prodigiosinella confusarubida) protein is Aminotransferase PigE.